A 455-amino-acid polypeptide reads, in one-letter code: Argininosuccinate lyase (455 aa).

It belongs to the lyase 1 family. Argininosuccinate lyase subfamily.

It is found in the cytoplasm. It carries out the reaction 2-(N(omega)-L-arginino)succinate = fumarate + L-arginine. The protein operates within amino-acid biosynthesis; L-arginine biosynthesis; L-arginine from L-ornithine and carbamoyl phosphate: step 3/3. This chain is Argininosuccinate lyase, found in Shewanella baltica (strain OS223).